A 334-amino-acid polypeptide reads, in one-letter code: N-acetylmuramoyl-L-alanine amidase sle1 (334 aa).

Positions 1–25 (MQKKVIAAIIGTSAISAVAATQANA) are cleaved as a signal peptide. Residues 27 to 70 (TTHTVKPGESVWAISNKYGISIAKLKSLNNLTSNLIFPNQVLKV) enclose the LysM 1 domain. Low complexity predominate over residues 71-86 (SGSSNSTSNSSRPSTN). A disordered region spans residues 71–90 (SGSSNSTSNSSRPSTNSGGG). The region spanning 91–134 (SYYTVQAGDSLSLIASKYGTTYQNIMRLNGLNNFFIYPGQKLKV) is the LysM 2 domain. The tract at residues 137 to 156 (TASSSNSTSNSSRPSTNSSG) is disordered. The LysM 3 domain maps to 158-201 (SYYTVQAGDSLSLIASKYGTTYQNIMRLNGLNNFFIYPGQKLKV). The Peptidase C51 domain maps to 210–334 (GSTTTTNRGY…YQVNNYRYIH (125 aa)).

Its subcellular location is the secreted. The protein resides in the cell surface. It carries out the reaction Hydrolyzes the link between N-acetylmuramoyl residues and L-amino acid residues in certain cell-wall glycopeptides.. Functionally, peptidoglycan hydrolase involved in the splitting of the septum during cell division. The chain is N-acetylmuramoyl-L-alanine amidase sle1 (sle1) from Staphylococcus aureus (strain MRSA252).